We begin with the raw amino-acid sequence, 126 residues long: uncharacterized protein (126 aa).

A disordered region spans residues Val83–His126. Basic and acidic residues predominate over residues His116–His126.

This is an uncharacterized protein from Galliformes (FAdV-1).